Consider the following 172-residue polypeptide: MRASRGFTLIELMVVMVIISVLIGLAVLSTGFASTSRELDSEAERLAGLIGVLTDEAVLDNREYGLRLERDAYQVLRYDEAKARWLPVARDSHRLPEWAELTFELDGQPLVLAGSKGEKEQKKGTDQPQLLILSSGELSPFRLRLAERGPEGRALSLSSDGFRLPRVEVARR.

A propeptide spans 1 to 6 (MRASRG) (leader sequence). Phe-7 is modified (N-methylphenylalanine). Residues 7–27 (FTLIELMVVMVIISVLIGLAV) form a helical membrane-spanning segment.

This sequence belongs to the GSP H family. As to quaternary structure, type II secretion is composed of four main components: the outer membrane complex, the inner membrane complex, the cytoplasmic secretion ATPase and the periplasm-spanning pseudopilus. Forms the tip of the type II pseudopilus by interacting with XcpV, XcpW and XcpX. Interacts with core component XcpT. In terms of processing, cleaved by prepilin peptidase. Methylated by prepilin peptidase at the amino group of the N-terminal phenylalanine once the leader sequence is cleaved by prepilin peptidase.

The protein resides in the cell inner membrane. In terms of biological role, component of the type II secretion system required for the energy-dependent secretion of extracellular factors such as proteases and toxins from the periplasm. Part of the pseudopilus tip complex that is critical for the recognition and binding of secretion substrates. Type II pseudopilus confers increased bacterial adhesive capabilities. The protein is Type II secretion system protein H (xcpU) of Pseudomonas aeruginosa (strain ATCC 15692 / DSM 22644 / CIP 104116 / JCM 14847 / LMG 12228 / 1C / PRS 101 / PAO1).